Here is a 501-residue protein sequence, read N- to C-terminus: Protein YLS7 (501 aa).

A helical; Signal-anchor for type II membrane protein transmembrane segment spans residues 25 to 45; sequence IAFAIGGLTSFVIFASLLLFT. Residues 69-131 form a disordered region; that stretch reads HSIHDPDRNP…NVSIDEEATQ (63 aa). Low complexity predominate over residues 78–89; the sequence is PSPVSSSESPPV. The span at 94–113 shows a compositional bias: basic and acidic residues; that stretch reads SDDKVLPKGSHDSNDVRLGE. Residues 114-124 are compositionally biased toward polar residues; the sequence is ETNSGKSSNVS. A GDS motif motif is present at residues 211-213; that stretch reads GDS. The tract at residues 438-467 is disordered; it reads RHDGHPGPYRSPDPKKITKRGPDGQPPPQD. Positions 449-459 are enriched in basic and acidic residues; that stretch reads PDPKKITKRGP. The DCXHWCLPGXXDXWN motif motif lies at 467–481; it reads DCLHWCMPGPVDTWN.

This sequence belongs to the PC-esterase family. TBL subfamily. In terms of tissue distribution, expressed in roots, cauline leaves and flowers.

It is found in the membrane. In terms of biological role, may act as a bridging protein that binds pectin and other cell wall polysaccharides. Probably involved in maintaining esterification of pectins. May be involved in the specific O-acetylation of cell wall polymers. The sequence is that of Protein YLS7 (YLS7) from Arabidopsis thaliana (Mouse-ear cress).